The primary structure comprises 280 residues: Mevalonyl-coenzyme A hydratase SIDH (280 aa).

A PTS1-type peroxisomal targeting signal motif is present at residues 278 to 280 (SKL).

The protein belongs to the enoyl-CoA hydratase/isomerase family.

The protein resides in the peroxisome. Its pathway is siderophore biosynthesis. Functionally, mevalonyl-coenzyme A hydratase; part of the gene cluster that mediates the biosynthesis of at least 11 siderophores, including beauverichelin A, dimerumic acid (DA), Na-dimethyl coprogen (NADC), eleutherazine B, ferricrocin (FC), fusarinine A, fusarinine C (FsC), metachelin A, mevalonolactone, rhodotorulic acid (RA) and tenellin. This cocktail of siderophores for iron metabolism is essential for virulence, and more specifically for the fungal virulence in penetrating through the host cuticle. Siderophore synthesis is also involved in conidial germination under iron-deficient conditions. For biosynthesis of fusarinine C, the transacylase SIDF transfers anhydromevalonyl to N(5)-hydroxyornithine. The required anhydromevalonyl-CoA moiety is derived from mevalonate by CoA ligation and dehydration catalyzed by SIDI and sidH respectively. SIDH is not essential for siderophore production, probably due to functional redundancy of this protein family, as there are 15 homologs of SIDH in B.bassiana. The polypeptide is Mevalonyl-coenzyme A hydratase SIDH (Beauveria bassiana (strain ARSEF 2860) (White muscardine disease fungus)).